Here is a 648-residue protein sequence, read N- to C-terminus: Biosynthetic arginine decarboxylase (648 aa).

Lys109 is modified (N6-(pyridoxal phosphate)lysine). 291–301 (LDVGGGLGVDY) contacts substrate.

The protein belongs to the Orn/Lys/Arg decarboxylase class-II family. SpeA subfamily. Mg(2+) serves as cofactor. Requires pyridoxal 5'-phosphate as cofactor.

It catalyses the reaction L-arginine + H(+) = agmatine + CO2. Its pathway is amine and polyamine biosynthesis; agmatine biosynthesis; agmatine from L-arginine: step 1/1. In terms of biological role, catalyzes the biosynthesis of agmatine from arginine. The polypeptide is Biosynthetic arginine decarboxylase (Prochlorococcus marinus (strain MIT 9303)).